We begin with the raw amino-acid sequence, 147 residues long: Hordoindoline-B2 (147 aa).

The signal sequence occupies residues 1-19 (MKTLFLLALLALVASTTSA). A propeptide spanning residues 20–28 (QYSVGGGYN) is cleaved from the precursor.

In terms of processing, five disulfide bonds are present. In terms of tissue distribution, found in endosperm and aleurone layer of developing kernels, but not in the embryo.

It localises to the membrane. The protein resides in the secreted. Its subcellular location is the extracellular space. Acts as a membranotoxin, probably through its antibacterial and antifungal activities, contributing to the defense mechanism of the plant against predators. Forms monovalent cation-selective ion channels in membranes. Contributes to grain texture and hardness. This Hordeum vulgare (Barley) protein is Hordoindoline-B2 (HINB-2).